A 320-amino-acid polypeptide reads, in one-letter code: uncharacterized protein (320 aa).

This sequence belongs to the anthranilate phosphoribosyltransferase family.

This is an uncharacterized protein from Escherichia coli (strain K12).